Reading from the N-terminus, the 306-residue chain is Putative secretory carrier-associated membrane protein 1 (306 aa).

Positions 1-60 (MAGRYDSNPFEEDDVNPFSEQARGKAGGQPSYGGGAFYMPNPRNVPSMSSNSRLSPLPPE) are disordered. Residues 1-141 (MAGRYDSNPF…EIPSHLQRMQ (141 aa)) lie on the Cytoplasmic side of the membrane. Gly residues predominate over residues 25-36 (KAGGQPSYGGGA). Polar residues predominate over residues 44-54 (NVPSMSSNSRL). The stretch at 72–109 (LDSSKDLKNREKELQAREAELNKREKELKRREEAAARA) forms a coiled coil. 4 consecutive transmembrane segments (helical) span residues 142–162 (YVAF…VIAV), 174–194 (IWLL…VLWY), 209–229 (FGLF…SAVA), and 257–277 (IFYF…IWVI). At 278-306 (QQVYMYFRGSGKAAEMKRDATRGAMRAAF) the chain is on the cytoplasmic side.

Belongs to the SCAMP family.

It is found in the cell membrane. The protein resides in the cytoplasmic vesicle. Its subcellular location is the secretory vesicle membrane. Probably involved in membrane trafficking. The protein is Putative secretory carrier-associated membrane protein 1 (SCAMP1) of Oryza sativa subsp. indica (Rice).